The primary structure comprises 173 residues: Glycine cleavage system H protein, mitochondrial (173 aa).

A mitochondrion-targeting transit peptide spans 1-48 (MALRAVRSVRAAVGGLRAISAPSAPCLPRPWGLRAGAVRELRTGPALL). The 83-residue stretch at 66–148 (VGTVGISNFA…YEDGWLIKMT (83 aa)) folds into the Lipoyl-binding domain. K107 is modified (N6-lipoyllysine).

The protein belongs to the GcvH family. Interacts with GLDC. The glycine cleavage system is composed of four proteins: P (GLDC), T (GCST), L (DLD) and H (GCSH). It depends on (R)-lipoate as a cofactor.

The protein localises to the mitochondrion. In terms of biological role, the glycine cleavage system catalyzes the degradation of glycine. The H protein (GCSH) shuttles the methylamine group of glycine from the P protein (GLDC) to the T protein (GCST). Has a pivotal role in the lipoylation of enzymes involved in cellular energetics such as the mitochondrial dihydrolipoyllysine-residue acetyltransferase component of pyruvate dehydrogenase complex (DLAT), and the mitochondrial dihydrolipoyllysine-residue succinyltransferase component of 2-oxoglutarate dehydrogenase complex (DLST). This is Glycine cleavage system H protein, mitochondrial from Bos taurus (Bovine).